The following is a 128-amino-acid chain: Keratin-associated protein 2-1 (128 aa).

The tract at residues 5 to 112 (CCGSTFSSLS…SVQSPCCRPP (108 aa)) is 10 X 5 AA repeats of C-C-[CDPQRWG]-[APRS]-[CIPSTVD].

It belongs to the KRTAP type 2 family. As to quaternary structure, interacts with hair keratins.

Functionally, in the hair cortex, hair keratin intermediate filaments are embedded in an interfilamentous matrix, consisting of hair keratin-associated proteins (KRTAP), which are essential for the formation of a rigid and resistant hair shaft through their extensive disulfide bond cross-linking with abundant cysteine residues of hair keratins. The matrix proteins include the high-sulfur and high-glycine-tyrosine keratins. The sequence is that of Keratin-associated protein 2-1 (KRTAP2-1) from Homo sapiens (Human).